Here is a 196-residue protein sequence, read N- to C-terminus: Pyridoxal 5'-phosphate synthase subunit PdxT (196 aa).

Residue 46–48 (GES) participates in L-glutamine binding. C78 (nucleophile) is an active-site residue. L-glutamine contacts are provided by residues R105 and 134–135 (IR). Catalysis depends on charge relay system residues H170 and E172.

It belongs to the glutaminase PdxT/SNO family. As to quaternary structure, in the presence of PdxS, forms a dodecamer of heterodimers. Only shows activity in the heterodimer.

It carries out the reaction aldehydo-D-ribose 5-phosphate + D-glyceraldehyde 3-phosphate + L-glutamine = pyridoxal 5'-phosphate + L-glutamate + phosphate + 3 H2O + H(+). It catalyses the reaction L-glutamine + H2O = L-glutamate + NH4(+). It functions in the pathway cofactor biosynthesis; pyridoxal 5'-phosphate biosynthesis. Catalyzes the hydrolysis of glutamine to glutamate and ammonia as part of the biosynthesis of pyridoxal 5'-phosphate. The resulting ammonia molecule is channeled to the active site of PdxS. In Pelotomaculum thermopropionicum (strain DSM 13744 / JCM 10971 / SI), this protein is Pyridoxal 5'-phosphate synthase subunit PdxT.